The primary structure comprises 442 residues: Cell adhesion molecule 1 (442 aa).

The first 44 residues, 1 to 44, serve as a signal peptide directing secretion; it reads MASVVLPSGSQCAAAAAAAAPPGLRLRLLLLLFSAAALIPTGDG. Residues 45-139 enclose the Ig-like V-type domain; that stretch reads QNLFTKDVTV…PPQESYTTIT (95 aa). Over 45-374 the chain is Extracellular; the sequence is QNLFTKDVTV…EEGSIRAVDH (330 aa). Cys-64 and Cys-124 are joined by a disulfide. Residues Asn-67, Asn-101, Asn-113, and Asn-165 are each glycosylated (N-linked (GlcNAc...) asparagine). Ig-like C2-type domains lie at 144-238 and 243-329; these read PRNL…RYLE and PQVH…YMLY. 2 disulfides stabilise this stretch: Cys-166–Cys-220 and Cys-267–Cys-313. Residues Asn-304 and Asn-308 are each glycosylated (N-linked (GlcNAc...) asparagine). A helical membrane pass occupies residues 375-395; that stretch reads AVIGGVVAVVVFAMLCLLIIL. The Cytoplasmic portion of the chain corresponds to 396–442; the sequence is GRYFARHKGTYFTHEAKGADDAADADTAIINAEGGQNNSEEKKEYFI. Thr-422 is modified (phosphothreonine). Phosphoserine is present on Ser-434.

Belongs to the nectin family. In terms of assembly, homodimer (via Ig-like V-type domain). Interacts with FARP1. Interacts (via Ig-like V-type domain) with CRTAM (via Ig-like V-type domain); the interaction competes with CRTAM homodimerization and CADM1 homodimerization. Interacts (via C-terminus) with EPB41L3/DAL1. The interaction with EPB41L3/DAL1 may act to anchor CADM1 to the actin cytoskeleton. Interacts (via C-terminus) with MPP2 (via PDZ domain). Interacts (via C-terminus) with MPP3 (via PDZ domain); this interaction connects CADM1 with DLG1. Interacts (via C-terminus) with PALS2 (via PDZ domain). As to quaternary structure, (Microbial infection) Interacts with herpes virus 8 proteins vFLIP and vGPCR; these interactions are essential for NF-kappa-B activation. In terms of processing, glycosylation at Asn-67 and Asn-101 promotes adhesive binding and synapse induction.

It localises to the cell membrane. The protein resides in the synapse. In terms of biological role, mediates homophilic cell-cell adhesion in a Ca(2+)-independent manner. Also mediates heterophilic cell-cell adhesion with CADM3 and NECTIN3 in a Ca(2+)-independent manner. Interaction with CRTAM promotes natural killer (NK) cell cytotoxicity and interferon-gamma (IFN-gamma) secretion by CD8+ cells in vitro as well as NK cell-mediated rejection of tumors expressing CADM1 in vivo. In mast cells, may mediate attachment to and promote communication with nerves. CADM1, together with MITF, is essential for development and survival of mast cells in vivo. By interacting with CRTAM and thus promoting the adhesion between CD8+ T-cells and CD8+ dendritic cells, regulates the retention of activated CD8+ T-cell within the draining lymph node. Required for the intestinal retention of intraepithelial CD4+ CD8+ T-cells and, to a lesser extent, intraepithelial and lamina propria CD8+ T-cells and CD4+ T-cells. Interaction with CRTAM promotes the adhesion to gut-associated CD103+ dendritic cells, which may facilitate the expression of gut-homing and adhesion molecules on T-cells and the conversion of CD4+ T-cells into CD4+ CD8+ T-cells. Acts as a synaptic cell adhesion molecule and plays a role in the formation of dendritic spines and in synapse assembly. May be involved in neuronal migration, axon growth, pathfinding, and fasciculation on the axons of differentiating neurons. May play diverse roles in the spermatogenesis including in the adhesion of spermatocytes and spermatids to Sertoli cells and for their normal differentiation into mature spermatozoa. Acts as a tumor suppressor in non-small-cell lung cancer (NSCLC) cells. May contribute to the less invasive phenotypes of lepidic growth tumor cells. (Microbial infection) Induces cell fusion in neuron infected by a neuropathogenic strain of measles. Interacts with measles hemagglutinin to trigger hyperfusogenic F-mediated membrane fusion and presumably transsynaptic cell-to-cell transmission of the virus. This is Cell adhesion molecule 1 from Homo sapiens (Human).